We begin with the raw amino-acid sequence, 999 residues long: Ulvan lyase, long isoform (999 aa).

The signal sequence occupies residues 1-21; the sequence is MKCLKTLLVSTTLLGAFSLNA. A substrate-binding site is contributed by 126 to 127; sequence SH. H127 (proton donor/acceptor) is an active-site residue. D189, D199, and K201 together coordinate Ca(2+). Residues Y280 and R297 each coordinate substrate. Positions 300, 303, and 305 each coordinate Ca(2+). Y361 is a binding site for substrate.

The protein belongs to the polysaccharide lyase 24 family.

Functionally, ulvan lyase involved in ulvan degradation. Ulvan is the main polysaccharide component of the Ulvales (green seaweed) cell wall. It is composed of disaccharide building blocks comprising 3-sulfated rhamnose (Rha3S) linked to D-glucuronic acid (GlcA), L-iduronic acid (IduA), or D-xylose (Xyl). Ulvan lyase catalyzes preferentially the endolytic cleavage of the glycosidic bond between Rha3S and the uronic acid GlcA, but not IduA, producing oligosaccharides that have unsaturated 4-deoxy-L-threo-hex-4-enopyranosiduronic acid (deltaUA) at the non-reducing end. The most abundant end products in the degradation of the ulvan polysaccharide were deltaUA-Rha3S disaccharides and deltaUA-Rha3S-IduA-Rha3S and deltaUA-Rha3S-Xyl-Rha3S tetrasaccharides. This chain is Ulvan lyase, long isoform, found in Alteromonas sp.